Reading from the N-terminus, the 396-residue chain is S-adenosylmethionine synthase (396 aa).

Residue His-14 coordinates ATP. Asp-16 is a Mg(2+) binding site. Glu-42 is a K(+) binding site. Residues Glu-55 and Gln-98 each contribute to the L-methionine site. The flexible loop stretch occupies residues 98–108 (QSPDIAQGVHG). Residues 167 to 169 (DAK), 234 to 235 (RF), Asp-243, 249 to 250 (RK), Ser-266, and Lys-270 contribute to the ATP site. Residue Asp-243 coordinates L-methionine. Residue Lys-274 coordinates L-methionine.

This sequence belongs to the AdoMet synthase family. As to quaternary structure, homotetramer; dimer of dimers. Requires Mg(2+) as cofactor. It depends on K(+) as a cofactor.

The protein localises to the cytoplasm. It carries out the reaction L-methionine + ATP + H2O = S-adenosyl-L-methionine + phosphate + diphosphate. Its pathway is amino-acid biosynthesis; S-adenosyl-L-methionine biosynthesis; S-adenosyl-L-methionine from L-methionine: step 1/1. Catalyzes the formation of S-adenosylmethionine (AdoMet) from methionine and ATP. The overall synthetic reaction is composed of two sequential steps, AdoMet formation and the subsequent tripolyphosphate hydrolysis which occurs prior to release of AdoMet from the enzyme. This is S-adenosylmethionine synthase from Treponema pallidum (strain Nichols).